We begin with the raw amino-acid sequence, 458 residues long: Sulfite exporter TauE/SafE family protein 2 (458 aa).

12 helical membrane-spanning segments follow: residues 5–25, 53–73, 74–94, 101–121, 128–148, 150–170, 227–247, 267–287, 324–344, 348–368, 386–406, and 418–438; these read FVPIILSFIIFLTPSIAEQEP, IELTTSTIIAGLLSFLASSIS, SAGGIGGGGLYVPIMTIVAGL, SFSAFMVTGGSIANVGCNLFV, GKTLIDFDLALLLEPCMLLGV, IGVICNLVFPNWLITSLFAVF, FPWIKLGVLVIIWLSYFAVYL, YWLISSSQIPLTLFFTLWICF, VMALLAGVLGGVFGIGGGMLI, LLQVGIAPEVTAATCSFMVLF, GTASIFAVICFVASLVGLKVV, and IIVFSVGIVMALSIVLMTSYG.

Belongs to the 4-toluene sulfonate uptake permease (TSUP) (TC 2.A.102) family.

The protein resides in the membrane. This Arabidopsis thaliana (Mouse-ear cress) protein is Sulfite exporter TauE/SafE family protein 2.